A 597-amino-acid polypeptide reads, in one-letter code: Dictomallein-3 (597 aa).

The N-terminal stretch at 1-19 (MKLILILIFLFSCILFINC) is a signal peptide. A Peptidase M66 domain is found at 148-409 (PDVGQDYTLK…QNYFKNSIYY (262 aa)). His-301 serves as a coordination point for Zn(2+). Glu-302 is an active-site residue. 2 residues coordinate Zn(2+): His-305 and His-311.

It belongs to the dictomallein family. Zn(2+) serves as cofactor.

The protein localises to the secreted. In Dictyostelium discoideum (Social amoeba), this protein is Dictomallein-3 (dtmlC).